The sequence spans 526 residues: MNNDFNSWDKYCNYLWFDKQVNIWLDISKINFTLDQISSLENKFKKVFSALKELEAGAISNIDEKRQVGHYWLRNPSVAPSNLIKDAINNEIRDISEFGEKILEGKITNNKNQKFTNVLWIGIGGSGLGPLLITEALQENSCGLNFSYIDNIDPFLISEKLDELSDKLATTLFVVVSKSGGTPEPKIAMNIIKKHVENKNLDWNSNAIAITMKDSQLYKKAQLENWLKIFNLPDWVGGRTSITSSVGLLPLALINRDVSEFIKGAAIMDDLTRIPNIKDNPAALLSSAWFFSGDGIGKRDMVVLPYRDRLQVFSKYLQQLVMESLGKKFNRKGEIVHQGISVFGNKGSTDQHAYVQQLRDGIDNFFCVFIELLDTPNSNFYFDSENPKEFLSGFLQGTRSALSNENRQSITITLDKLSCLTLGALIALFERAVSFYAELVDINAYDQPGVEAGKKAAAEIIDYQKQVTEIFNNGEELSIKEITSLLRNSSAEPIFFIIRQMCFGNDDYLINGDWSKPSTIRIKKIS.

E323 serves as the catalytic Proton donor. Catalysis depends on residues H352 and K454.

It belongs to the GPI family.

It localises to the cytoplasm. The catalysed reaction is alpha-D-glucose 6-phosphate = beta-D-fructose 6-phosphate. It participates in carbohydrate biosynthesis; gluconeogenesis. Its pathway is carbohydrate degradation; glycolysis; D-glyceraldehyde 3-phosphate and glycerone phosphate from D-glucose: step 2/4. Catalyzes the reversible isomerization of glucose-6-phosphate to fructose-6-phosphate. This chain is Glucose-6-phosphate isomerase, found in Prochlorococcus marinus subsp. pastoris (strain CCMP1986 / NIES-2087 / MED4).